The chain runs to 198 residues: Recombination protein RecR (198 aa).

The C4-type zinc-finger motif lies at 57 to 72 (CSICGRLTDDDPCSIC). A Toprim domain is found at 80 to 175 (TTILVLEDSR…KVTRLARGLA (96 aa)).

Belongs to the RecR family.

In terms of biological role, may play a role in DNA repair. It seems to be involved in an RecBC-independent recombinational process of DNA repair. It may act with RecF and RecO. The chain is Recombination protein RecR from Streptococcus pneumoniae (strain 70585).